The primary structure comprises 311 residues: Olfactory receptor 8H1 (311 aa).

Residues methionine 1 to methionine 25 are Extracellular-facing. Asparagine 5 is a glycosylation site (N-linked (GlcNAc...) asparagine). A helical transmembrane segment spans residues alanine 26–isoleucine 46. Residues leucine 47 to glutamine 54 lie on the Cytoplasmic side of the membrane. A helical transmembrane segment spans residues leucine 55–threonine 75. Over valine 76–alanine 98 the chain is Extracellular. A disulfide bridge connects residues cysteine 96 and cysteine 188. Residues glutamine 99–tyrosine 119 form a helical membrane-spanning segment. The Cytoplasmic portion of the chain corresponds to aspartate 120–arginine 138. Residues leucine 139–valine 159 form a helical membrane-spanning segment. Over valine 160–isoleucine 196 the chain is Extracellular. A helical transmembrane segment spans residues methionine 197–serine 216. The Cytoplasmic segment spans residues tyrosine 217–alanine 236. The helical transmembrane segment at leucine 237 to threonine 257 threads the bilayer. Topologically, residues tyrosine 258 to aspartate 270 are extracellular. The chain crosses the membrane as a helical span at residues glutamine 271–leucine 291. At arginine 292–arginine 311 the chain is on the cytoplasmic side.

The protein belongs to the G-protein coupled receptor 1 family.

The protein resides in the cell membrane. Its function is as follows. Odorant receptor. This is Olfactory receptor 8H1 (OR8H1) from Homo sapiens (Human).